Reading from the N-terminus, the 145-residue chain is Maximins 3/H3 type 1 (145 aa).

Residues 1–18 (MNFKYIVAVSFLIASAYA) form the signal peptide. 2 propeptides span residues 19–43 (RSVQNDEQSLSQRDVLEEEESLREI) and 74–124 (RIAE…KEKR). The residue at position 144 (isoleucine 144) is an Isoleucine amide.

This sequence belongs to the bombinin family. In terms of tissue distribution, expressed by the skin glands.

It is found in the secreted. Maximin-3 shows antibacterial activity against both Gram-positive and Gram-negative bacteria. It also shows antimicrobial activity against the fungus C.albicans, but not against A.flavus nor P.uticale. It has little hemolytic activity. It possess a significant cytotoxicity against tumor cell lines. It possess a significant anti-HIV activity. It shows high spermicidal activity. Functionally, maximin-H3 shows antibacterial activity against both Gram-positive and Gram-negative bacteria. It also shows antimicrobial activity against the fungus C.albicans. Shows strong hemolytic activity. This chain is Maximins 3/H3 type 1, found in Bombina maxima (Giant fire-bellied toad).